The chain runs to 104 residues: Fusaric acid biosynthesis protein 2 (104 aa).

The protein belongs to the YciI family.

It functions in the pathway mycotoxin biosynthesis. In terms of biological role, part of the gene cluster that mediates the biosynthesis of fusaric acid, a mycotoxin with low to moderate toxicity to animals and humans, but with high phytotoxic properties. L-aspartate is suggested as fusaric acid amino acid precursor that is activated and further processed to O-acetyl-L-homoserine by cluster enzymes aspartate kinase FUB3 and homoserine O-acetyltransferase FUB5, as well as enzymes of the primary metabolism. The polyketide synthase (PKS) FUB1 generates the triketide trans-2-hexenal which is presumptively released by the hydrolase FUB4 and linked to the NRPS-bound amino acid precursor by NAD(P)-dependent dehydrogenase FUB6. FUB1, FUB4, and the non-canonical NRPS Fub8 may form an enzyme complex. Further processing of the NRPS-bound intermediate might be carried out by FUB6 and the sulfhydrylase FUB7, enabling a spontaneous electrocyclization to close the carbon backbone of fusaric acid. Dihydrofusaric acid is likely to be released via reduction by the thioester reductase (TR) domain of FUB8 whereupon the final oxidation to fusaric acid may (also) be performed by the FMN-dependent dehydrogenase FUB9. The protein is Fusaric acid biosynthesis protein 2 of Gibberella moniliformis (strain M3125 / FGSC 7600) (Maize ear and stalk rot fungus).